The chain runs to 1157 residues: ATP-dependent helicase/deoxyribonuclease subunit B (1157 aa).

Positions 1 to 278 (MTLQIIAGRS…FFLENKRAKT (278 aa)) constitute a UvrD-like helicase ATP-binding domain. An ATP-binding site is contributed by 8–15 (GRSGTGKT). In terms of domain architecture, UvrD-like helicase C-terminal spans 272–590 (ENKRAKTESL…VLSDMENAKL (319 aa)). 4 residues coordinate [4Fe-4S] cluster: cysteine 794, cysteine 1115, cysteine 1118, and cysteine 1124.

It belongs to the helicase family. AddB/RexB type 1 subfamily. As to quaternary structure, heterodimer of AddA and AddB. Mg(2+) is required as a cofactor. [4Fe-4S] cluster serves as cofactor.

Its function is as follows. The heterodimer acts as both an ATP-dependent DNA helicase and an ATP-dependent, dual-direction single-stranded exonuclease. Recognizes the chi site generating a DNA molecule suitable for the initiation of homologous recombination. The AddB subunit has 5' -&gt; 3' nuclease activity but not helicase activity. This chain is ATP-dependent helicase/deoxyribonuclease subunit B, found in Listeria monocytogenes serotype 4a (strain HCC23).